The sequence spans 218 residues: 1-Cys peroxiredoxin PER1 (218 aa).

The region spanning 4-164 (LTIGDTVPNL…VVRAVDSLLT (161 aa)) is the Thioredoxin domain. The active-site Cysteine sulfenic acid (-SOH) intermediate is cysteine 46. Positions 194–217 (KKMFPQGFETADLPSKKGYLRFTK) match the Bipartite nuclear localization signal motif.

Belongs to the peroxiredoxin family. Prx6 subfamily.

The protein resides in the nucleus. Its subcellular location is the cytoplasm. It carries out the reaction a hydroperoxide + [thioredoxin]-dithiol = an alcohol + [thioredoxin]-disulfide + H2O. Functionally, thiol-specific peroxidase that catalyzes the reduction of hydrogen peroxide and organic hydroperoxides to water and alcohols, respectively. Seems to contribute to the inhibition of germination during stress. This chain is 1-Cys peroxiredoxin PER1 (PER1), found in Triticum aestivum (Wheat).